Consider the following 249-residue polypeptide: Anamorsin homolog (249 aa).

The tract at residues 1–130 is N-terminal SAM-like domain; it reads MEQFKDLQKS…ETGSAARLSF (130 aa). A linker region spans residues 131 to 161; that stretch reads AKKAAGVNVWKISGDDEELIDEEDLLDEADK. Residues C172, C181, C184, and C186 each coordinate [2Fe-2S] cluster. The fe-S binding site A stretch occupies residues 172–186; it reads CSTTGKRKACKNCSC. Residues C210, C213, C221, and C224 each contribute to the [4Fe-4S] cluster site. 2 consecutive short sequence motifs (cx2C motif) follow at residues 210 to 213 and 221 to 224; these read CGNC and CSTC. The segment at 210–224 is fe-S binding site B; the sequence is CGNCYLGDAFRCSTC.

It belongs to the anamorsin family. As to quaternary structure, monomer. [2Fe-2S] cluster is required as a cofactor. It depends on [4Fe-4S] cluster as a cofactor.

The protein localises to the cytoplasm. Its subcellular location is the mitochondrion intermembrane space. Its function is as follows. Component of the cytosolic iron-sulfur (Fe-S) protein assembly (CIA) machinery. Required for the maturation of extramitochondrial Fe-S proteins. Part of an electron transfer chain functioning in an early step of cytosolic Fe-S biogenesis, facilitating the de novo assembly of a [4Fe-4S] cluster on the cytosolic Fe-S scaffold complex. Electrons are transferred from NADPH via a FAD- and FMN-containing diflavin oxidoreductase. Together with the diflavin oxidoreductase, also required for the assembly of the diferric tyrosyl radical cofactor of ribonucleotide reductase (RNR), probably by providing electrons for reduction during radical cofactor maturation in the catalytic small subunit. The chain is Anamorsin homolog from Drosophila grimshawi (Hawaiian fruit fly).